Consider the following 247-residue polypeptide: Carboxy-S-adenosyl-L-methionine synthase (247 aa).

S-adenosyl-L-methionine contacts are provided by residues Tyr40, 65–67 (GAS), 90–91 (DN), 122–123 (DI), Asn137, and Arg204.

Belongs to the class I-like SAM-binding methyltransferase superfamily. Cx-SAM synthase family. Homodimer.

It carries out the reaction prephenate + S-adenosyl-L-methionine = carboxy-S-adenosyl-L-methionine + 3-phenylpyruvate + H2O. Catalyzes the conversion of S-adenosyl-L-methionine (SAM) to carboxy-S-adenosyl-L-methionine (Cx-SAM). In Pseudomonas putida (strain W619), this protein is Carboxy-S-adenosyl-L-methionine synthase.